Here is a 303-residue protein sequence, read N- to C-terminus: Hemolysin E (303 aa).

Cysteine 87 and cysteine 285 are disulfide-bonded. Residues 183–203 (AGVVAGPFGLIISYSIAAGVV) form a helical membrane-spanning segment.

This sequence belongs to the hemolysin E family. In terms of assembly, monomer and oligomer. In periplasm, it is present as a monomer, while in outer membrane vesicles, it oligomerizes to form a pore structure that is active. The pore is formed by a dodecamer. Post-translationally, in periplasm, it forms a disulfide bond, which prevents the oligomerization. In outer membrane vesicles, the redox status prevents formation of the disulfide bond, leading to oligomerization and pore formation.

It is found in the secreted. It localises to the periplasm. Its subcellular location is the host cell membrane. Toxin, which has some hemolytic activity towards mammalian cells. Acts by forming a pore-like structure upon contact with mammalian cells. The polypeptide is Hemolysin E (hlyE) (Escherichia coli O157:H7).